We begin with the raw amino-acid sequence, 638 residues long: Asparagine--tRNA ligase, cytoplasmic 2 (638 aa).

Basic and acidic residues predominate over residues 1-16 (MESHGKTHQKEHDNDL). Disordered stretches follow at residues 1-23 (MESH…PITL) and 62-87 (VKKN…DQAH).

The protein belongs to the class-II aminoacyl-tRNA synthetase family.

The protein localises to the cytoplasm. Its subcellular location is the cytosol. The catalysed reaction is tRNA(Asn) + L-asparagine + ATP = L-asparaginyl-tRNA(Asn) + AMP + diphosphate + H(+). In Arabidopsis thaliana (Mouse-ear cress), this protein is Asparagine--tRNA ligase, cytoplasmic 2.